We begin with the raw amino-acid sequence, 320 residues long: tRNA(Ile)-lysidine synthase, chloroplastic (320 aa).

31–36 contacts ATP; the sequence is SGGKDS.

It belongs to the tRNA(Ile)-lysidine synthase family.

Its subcellular location is the plastid. The protein localises to the chloroplast. It catalyses the reaction cytidine(34) in tRNA(Ile2) + L-lysine + ATP = lysidine(34) in tRNA(Ile2) + AMP + diphosphate + H(+). Its function is as follows. Ligates lysine onto the cytidine present at position 34 of the AUA codon-specific tRNA(Ile) that contains the anticodon CAU, in an ATP-dependent manner. Cytidine is converted to lysidine, thus changing the amino acid specificity of the tRNA from methionine to isoleucine. This Gracilaria tenuistipitata var. liui (Red alga) protein is tRNA(Ile)-lysidine synthase, chloroplastic.